The primary structure comprises 122 residues: Thioredoxin H-type (122 aa).

The 117-residue stretch at 2 to 118 (AAEEGVVIAC…IVKHVGATAA (117 aa)) folds into the Thioredoxin domain. A disulfide bridge links cysteine 40 with cysteine 43.

It is found in the cytoplasm. Participates in various redox reactions through the reversible oxidation of the active center dithiol to a disulfide. The H form is known to activate a number of cytosolic enzymes. This chain is Thioredoxin H-type (TRXH), found in Oryza sativa subsp. indica (Rice).